We begin with the raw amino-acid sequence, 632 residues long: Chaperone protein DnaK (632 aa).

Position 198 is a phosphothreonine; by autocatalysis (T198). A disordered region spans residues 599–632 (YKKAGASQQGAGSTTQSKKEEDVIEAEVEDKDNK). A compositionally biased stretch (polar residues) spans 604–614 (ASQQGAGSTTQ). Positions 620-632 (DVIEAEVEDKDNK) are enriched in acidic residues.

It belongs to the heat shock protein 70 family.

In terms of biological role, acts as a chaperone. This is Chaperone protein DnaK from Thermodesulfovibrio yellowstonii (strain ATCC 51303 / DSM 11347 / YP87).